The chain runs to 363 residues: Fructose-bisphosphate aldolase (363 aa).

Residues arginine 56 and lysine 147 each contribute to the substrate site. Glutamate 188 acts as the Proton acceptor in catalysis. Residue lysine 230 is the Schiff-base intermediate with dihydroxyacetone-P of the active site.

It belongs to the class I fructose-bisphosphate aldolase family.

The catalysed reaction is beta-D-fructose 1,6-bisphosphate = D-glyceraldehyde 3-phosphate + dihydroxyacetone phosphate. Its pathway is carbohydrate degradation; glycolysis; D-glyceraldehyde 3-phosphate and glycerone phosphate from D-glucose: step 4/4. The chain is Fructose-bisphosphate aldolase (FBPA) from Echinococcus multilocularis (Fox tapeworm).